A 478-amino-acid chain; its full sequence is Ribosome biogenesis protein NOP53 (478 aa).

Gly residues predominate over residues 1-10 (MAAGGSGVGG). A disordered region spans residues 1–51 (MAAGGSGVGGKRSSKSDADSGFLGLRPTSVDPALRRRRRGPRNKKRGWRRL). At A2 the chain carries N-acetylalanine. The residue at position 29 (S29) is a Phosphoserine. The span at 35-49 (RRRRRGPRNKKRGWR) shows a compositional bias: basic residues. Phosphoserine is present on residues S93 and S305. Positions 148-431 (KEQLWEKLAK…SELTDSLRTL (284 aa)) are mediates interaction with CDKN2A/isoform tumor suppressor ARF. The segment at 181 to 478 (KPGPQDTVER…EKRAFREIQL (298 aa)) is mediates interaction with NF2. A disordered region spans residues 303–344 (EESDGEGEPGQGEGPEAGDAEVCPTPARLATTEKKTEQQRRR). Basic and acidic residues predominate over residues 333 to 342 (TTEKKTEQQR). Positions 342–386 (RRREKAVHRLRVQQAALRAARLRHQELFRLRGIKAQVALRLAELA) are mediates interaction with human herpesvirus 8 protein ORF16. Nucleolar localization signal regions lie at residues 347 to 395 (AVHR…RQAR) and 396 to 478 (REAE…EIQL).

Belongs to the NOP53 family. Homooligomer. Interacts with PTEN; regulates PTEN phosphorylation and increases its stability. Interacts with RPL11; retains RPL11 into the nucleolus. Interacts with CDKN2A/isoform tumor suppressor ARF; the interaction is direct and promotes ARF nucleoplasmic relocalization and ubiquitin-mediated proteasomal degradation. Interacts with NPM1; the interaction is direct and competitive with MYC. Interacts with NF2 (via FERM domain); the interaction is direct. Interacts with p53/TP53 (via the oligomerization region); the interaction is direct and may prevent the MDM2-mediated proteasomal degradation of p53/TP53. Interacts with RIGI; may regulate RIGI through USP15-mediated 'Lys-63'-linked deubiquitination. Interacts with UBTF. In terms of assembly, (Microbial infection) Interacts with herpes simplex virus 1 early proteins ICP22 and ICP0. As to quaternary structure, (Microbial infection) Interacts with Human herpesvirus 8 protein ORF16; may sequester ORF16 in host nucleolus and reduce its antiapoptotic activity. In terms of processing, ubiquitin-mediated proteasomal degradation is regulated by c-JUN. It is associated with relocalization to the nucleoplasm and decreased homooligomerization. Post-translationally, phosphorylated upon DNA damage probably by ATM and DNA-PK; may regulate NOP53 degradation. In terms of tissue distribution, expressed at high levels in heart and pancreas, moderate levels in placenta, liver, skeletal muscle, and kidney, and low levels in brain and lung.

It localises to the nucleus. The protein localises to the nucleolus. Its subcellular location is the nucleoplasm. Nucleolar protein which is involved in the integration of the 5S RNP into the ribosomal large subunit during ribosome biogenesis. In ribosome biogenesis, may also play a role in rRNA transcription. Also functions as a nucleolar sensor that regulates the activation of p53/TP53 in response to ribosome biogenesis perturbation, DNA damage and other stress conditions. DNA damage or perturbation of ribosome biogenesis disrupt the interaction between NOP53 and RPL11 allowing RPL11 transport to the nucleoplasm where it can inhibit MDM2 and allow p53/TP53 activation. It may also positively regulate the function of p53/TP53 in cell cycle arrest and apoptosis through direct interaction, preventing its MDM2-dependent ubiquitin-mediated proteasomal degradation. Originally identified as a tumor suppressor, it may also play a role in cell proliferation and apoptosis by positively regulating the stability of PTEN, thereby antagonizing the PI3K-AKT/PKB signaling pathway. May also inhibit cell proliferation and increase apoptosis through its interaction with NF2. May negatively regulate NPM1 by regulating its nucleoplasmic localization, oligomerization and ubiquitin-mediated proteasomal degradation. Thereby, may prevent NPM1 interaction with MYC and negatively regulate transcription mediated by the MYC-NPM1 complex. May also regulate cellular aerobic respiration. In the cellular response to viral infection, may play a role in the attenuation of interferon-beta through the inhibition of RIGI. The chain is Ribosome biogenesis protein NOP53 from Homo sapiens (Human).